The chain runs to 290 residues: Zinc finger matrin-type protein 3 (290 aa).

2 consecutive Matrin-type zinc fingers follow at residues 70–100 (LFCK…KLRN) and 148–178 (DYCK…RLRL). Disordered stretches follow at residues 182–203 (QSHS…EGSE) and 266–290 (ESKQ…GYVQ). The Matrin-type 3 zinc-finger motif lies at 246–276 (FYCSMCNVGAGEEVEFRQHLESKQHKSKVSE). Positions 266-283 (ESKQHKSKVSEQRYRSEM) are enriched in basic and acidic residues.

Interacts with dsRNA. As to expression, constitutively expressed in brain and testis. Also expressed in lung, kidney and spleen after whole body gamma irradiation.

The protein localises to the nucleus. It is found in the nucleolus. In terms of biological role, acts as a bona fide target gene of p53/TP53. May play a role in the TP53-dependent growth regulatory pathway. May contribute to TP53-mediated apoptosis by regulation of TP53 expression and translocation to the nucleus and nucleolus. The sequence is that of Zinc finger matrin-type protein 3 from Mus musculus (Mouse).